We begin with the raw amino-acid sequence, 390 residues long: 3,5-dihydroxybiphenyl synthase (390 aa).

The active site involves Cys161.

This sequence belongs to the thiolase-like superfamily. Chalcone/stilbene synthases family. As to quaternary structure, homodimer.

The enzyme catalyses benzoyl-CoA + 3 malonyl-CoA + 3 H(+) = biphenyl-3,5-diol + 4 CO2 + 4 CoA. Functionally, type III polyketide synthase involved in the biosynthesis of the phytoalexins bisphenyls and dibenzofurans. Can also use salicoyl-CoA and malonyl-CoA to produce a diketide intermediate yielding 4-hydroxycoumarin after cyclization and enolization. Can also use m-hydroxybenzoyl-CoA as substrate, producing m-hydroxybenzoyl diacetic acid lactone as a derailment product. No activity with p-hydroxybenzoyl-CoA, CoA-linked cinnamic acids or acetyl-CoA. This Sorbus aucuparia (European mountain ash) protein is 3,5-dihydroxybiphenyl synthase (BIS1).